Here is a 164-residue protein sequence, read N- to C-terminus: NADH-quinone oxidoreductase subunit I 1 (164 aa).

2 consecutive 4Fe-4S ferredoxin-type domains span residues 54 to 84 (LRRYPNGEERCIACKLCEAICPAQAITIEAG) and 95 to 124 (VRYDIDMVKCIYCGFCQEACPVDAIVEGPN). The [4Fe-4S] cluster site is built by cysteine 64, cysteine 67, cysteine 70, cysteine 74, cysteine 104, cysteine 107, cysteine 110, and cysteine 114.

Belongs to the complex I 23 kDa subunit family. As to quaternary structure, NDH-1 is composed of 14 different subunits. Subunits NuoA, H, J, K, L, M, N constitute the membrane sector of the complex. The cofactor is [4Fe-4S] cluster.

The protein resides in the cell inner membrane. It carries out the reaction a quinone + NADH + 5 H(+)(in) = a quinol + NAD(+) + 4 H(+)(out). Its function is as follows. NDH-1 shuttles electrons from NADH, via FMN and iron-sulfur (Fe-S) centers, to quinones in the respiratory chain. The immediate electron acceptor for the enzyme in this species is believed to be ubiquinone. Couples the redox reaction to proton translocation (for every two electrons transferred, four hydrogen ions are translocated across the cytoplasmic membrane), and thus conserves the redox energy in a proton gradient. This Rhizobium meliloti (strain 1021) (Ensifer meliloti) protein is NADH-quinone oxidoreductase subunit I 1.